A 101-amino-acid polypeptide reads, in one-letter code: Small ribosomal subunit protein uS14 (101 aa).

This sequence belongs to the universal ribosomal protein uS14 family. In terms of assembly, part of the 30S ribosomal subunit. Contacts proteins S3 and S10.

Its function is as follows. Binds 16S rRNA, required for the assembly of 30S particles and may also be responsible for determining the conformation of the 16S rRNA at the A site. This is Small ribosomal subunit protein uS14 from Klebsiella pneumoniae (strain 342).